We begin with the raw amino-acid sequence, 619 residues long: Dihydroxy-acid dehydratase (619 aa).

Aspartate 81 is a binding site for Mg(2+). [2Fe-2S] cluster is bound at residue cysteine 122. Mg(2+) contacts are provided by aspartate 123 and lysine 124. Lysine 124 bears the N6-carboxylysine mark. Cysteine 198 provides a ligand contact to [2Fe-2S] cluster. Position 494 (glutamate 494) interacts with Mg(2+). The Proton acceptor role is filled by serine 520.

Belongs to the IlvD/Edd family. As to quaternary structure, homodimer. The cofactor is [2Fe-2S] cluster. It depends on Mg(2+) as a cofactor.

It catalyses the reaction (2R)-2,3-dihydroxy-3-methylbutanoate = 3-methyl-2-oxobutanoate + H2O. The enzyme catalyses (2R,3R)-2,3-dihydroxy-3-methylpentanoate = (S)-3-methyl-2-oxopentanoate + H2O. The protein operates within amino-acid biosynthesis; L-isoleucine biosynthesis; L-isoleucine from 2-oxobutanoate: step 3/4. It participates in amino-acid biosynthesis; L-valine biosynthesis; L-valine from pyruvate: step 3/4. In terms of biological role, functions in the biosynthesis of branched-chain amino acids. Catalyzes the dehydration of (2R,3R)-2,3-dihydroxy-3-methylpentanoate (2,3-dihydroxy-3-methylvalerate) into 2-oxo-3-methylpentanoate (2-oxo-3-methylvalerate) and of (2R)-2,3-dihydroxy-3-methylbutanoate (2,3-dihydroxyisovalerate) into 2-oxo-3-methylbutanoate (2-oxoisovalerate), the penultimate precursor to L-isoleucine and L-valine, respectively. This Neisseria meningitidis serogroup C / serotype 2a (strain ATCC 700532 / DSM 15464 / FAM18) protein is Dihydroxy-acid dehydratase.